Consider the following 214-residue polypeptide: Orotate phosphoribosyltransferase (214 aa).

5-phospho-alpha-D-ribose 1-diphosphate-binding positions include R125, K126, K129, H131, and 151-159; that span reads EDTSTTGNS. Orotate is bound by residues T155 and R183.

The protein belongs to the purine/pyrimidine phosphoribosyltransferase family. PyrE subfamily. In terms of assembly, homodimer. The cofactor is Mg(2+).

The enzyme catalyses orotidine 5'-phosphate + diphosphate = orotate + 5-phospho-alpha-D-ribose 1-diphosphate. Its pathway is pyrimidine metabolism; UMP biosynthesis via de novo pathway; UMP from orotate: step 1/2. Catalyzes the transfer of a ribosyl phosphate group from 5-phosphoribose 1-diphosphate to orotate, leading to the formation of orotidine monophosphate (OMP). The protein is Orotate phosphoribosyltransferase of Tropheryma whipplei (strain Twist) (Whipple's bacillus).